The following is a 299-amino-acid chain: uncharacterized protein (299 aa).

8 consecutive transmembrane segments (helical) span residues 13–33, 36–56, 79–99, 112–132, 151–171, 201–221, 241–261, and 267–287; these read ILFL…LHFM, AFVI…FLML, SFGI…VIII, TAIG…ISVI, ITSE…LFFI, FLIL…VILV, YVIL…MLLS, and PPGP…FLII.

Belongs to the ABC-3 integral membrane protein family.

The protein resides in the plastid. The protein localises to the cyanelle membrane. This is an uncharacterized protein from Cyanophora paradoxa.